We begin with the raw amino-acid sequence, 214 residues long: 3-isopropylmalate dehydratase small subunit (214 aa).

This sequence belongs to the LeuD family. LeuD type 1 subfamily. Heterodimer of LeuC and LeuD.

The catalysed reaction is (2R,3S)-3-isopropylmalate = (2S)-2-isopropylmalate. The protein operates within amino-acid biosynthesis; L-leucine biosynthesis; L-leucine from 3-methyl-2-oxobutanoate: step 2/4. In terms of biological role, catalyzes the isomerization between 2-isopropylmalate and 3-isopropylmalate, via the formation of 2-isopropylmaleate. This chain is 3-isopropylmalate dehydratase small subunit, found in Desulforapulum autotrophicum (strain ATCC 43914 / DSM 3382 / VKM B-1955 / HRM2) (Desulfobacterium autotrophicum).